A 236-amino-acid polypeptide reads, in one-letter code: Uridylate kinase (236 aa).

Residue lysine 10 to glycine 13 participates in ATP binding. A UMP-binding site is contributed by glycine 52. ATP contacts are provided by glycine 53 and arginine 57. Residues aspartate 72 and threonine 133–threonine 140 contribute to the UMP site. ATP-binding residues include threonine 160, tyrosine 166, and aspartate 169.

The protein belongs to the UMP kinase family. Homohexamer.

The protein resides in the cytoplasm. The catalysed reaction is UMP + ATP = UDP + ADP. It participates in pyrimidine metabolism; CTP biosynthesis via de novo pathway; UDP from UMP (UMPK route): step 1/1. Its activity is regulated as follows. Inhibited by UTP. Functionally, catalyzes the reversible phosphorylation of UMP to UDP. In Polaromonas sp. (strain JS666 / ATCC BAA-500), this protein is Uridylate kinase.